The primary structure comprises 430 residues: Histidinol dehydrogenase (430 aa).

Residues S237, Q259, and H262 each contribute to the substrate site. The Zn(2+) site is built by Q259 and H262. Residues E327 and H328 each act as proton acceptor in the active site. 4 residues coordinate substrate: H328, D361, E415, and H420. Zn(2+) is bound at residue D361. H420 lines the Zn(2+) pocket.

This sequence belongs to the histidinol dehydrogenase family. Requires Zn(2+) as cofactor.

The enzyme catalyses L-histidinol + 2 NAD(+) + H2O = L-histidine + 2 NADH + 3 H(+). It functions in the pathway amino-acid biosynthesis; L-histidine biosynthesis; L-histidine from 5-phospho-alpha-D-ribose 1-diphosphate: step 9/9. Catalyzes the sequential NAD-dependent oxidations of L-histidinol to L-histidinaldehyde and then to L-histidine. This is Histidinol dehydrogenase from Sulfurimonas denitrificans (strain ATCC 33889 / DSM 1251) (Thiomicrospira denitrificans (strain ATCC 33889 / DSM 1251)).